Reading from the N-terminus, the 196-residue chain is Small ribosomal subunit protein uS4c (196 aa).

The interval 17-38 (ALPGLTRKTPKSRSNLKKKFHS) is disordered. Residues 24–38 (KTPKSRSNLKKKFHS) show a composition bias toward basic residues. The S4 RNA-binding domain occupies 89–169 (MRLDNILFRL…LPKHLTIDTL (81 aa)).

Belongs to the universal ribosomal protein uS4 family. Part of the 30S ribosomal subunit. Contacts protein S5. The interaction surface between S4 and S5 is involved in control of translational fidelity.

Its subcellular location is the plastid. It localises to the chloroplast. Its function is as follows. One of the primary rRNA binding proteins, it binds directly to 16S rRNA where it nucleates assembly of the body of the 30S subunit. With S5 and S12 plays an important role in translational accuracy. The polypeptide is Small ribosomal subunit protein uS4c (rps4) (Lygeum spartum).